The sequence spans 137 residues: Small ribosomal subunit protein uS12 (137 aa).

A disordered region spans residues 1–26 (MPTINQLVTKGRKRKASKTKSPALNQ).

The protein belongs to the universal ribosomal protein uS12 family. As to quaternary structure, part of the 30S ribosomal subunit. Contacts proteins S8 and S17. May interact with IF1 in the 30S initiation complex.

In terms of biological role, with S4 and S5 plays an important role in translational accuracy. Its function is as follows. Interacts with and stabilizes bases of the 16S rRNA that are involved in tRNA selection in the A site and with the mRNA backbone. Located at the interface of the 30S and 50S subunits, it traverses the body of the 30S subunit contacting proteins on the other side and probably holding the rRNA structure together. The combined cluster of proteins S8, S12 and S17 appears to hold together the shoulder and platform of the 30S subunit. This chain is Small ribosomal subunit protein uS12, found in Mycoplasmopsis pulmonis (strain UAB CTIP) (Mycoplasma pulmonis).